The primary structure comprises 643 residues: MQLTRLVQVDCPLGPDVLLLQRMEGREELGRLFAYELHLVSENPNLPLEQLLGKPMSLSLELPGGSRRFFHGIVARCSQVAGHGQFAGYQATLRPWPWLLTRTSDCRIFQNQSVPEIIKQVFRNLGFSDFEDALTRPYREWEYCVQYRETSFDFISRLMEQEGIYYWFRHEQKRHILVLSDAYGAHRSPGGYASVPYYPPTLGHRERDHFFDWQMAREVQPGSLTLNDYDFQRPGARLEVRSNIARPHAAADYPLYDYPGEYVQSQDGEQYARNRIEAIQAQHERVRLRGVVRGIGAGHLFRLSGYPRDDQNREYLVVGAEYRVVQELYETGSGGAGSQFESELDCIDASQSFRLLPQTPVPVVRGPQTAVVVGPKGEEIWTDQYGRVKVHFHWDRHDQSNENSSCWIRVSQAWAGKNWGSMQIPRIGQEVIVSFLEGDPDRPIITGRVYNAEQTVPYELPANATQSGMKSRSSKGGTPANFNEIRMEDKKGAEQLYIHAERNQDNLVENDASLSVGHDRNKSIGHDELARIGNNRTRAVKLNDTLLVGGAKSDSVTGTYLIEAGAQIRLVCGKSVVEFNADGTINISGSAFNLYASGNGNIDTGGRLDLNSGGASEVDAKGKGVQGTIDGQVQAMFPPPAKG.

Belongs to the VgrG protein family. Forms homotrimers. Part of the type VI secretion system (T6SS). Interacts with EagT6 and Tse6; these interactions are required for Tse6 loading onto VgrG1. Interacts with Hcp1.

The protein resides in the secreted. Part of the H1 type VI secretion system (H1-T6SS) specialized secretion system, which delivers several virulence factors in both prokaryotic and eukaryotic cells during infection. Forms the spike at the tip of the elongating tube formed by haemolysin co-regulated protein 1/Hcp1. Allows the delivery of the Tse6 toxin to target cells where it exerts its toxicity. The chain is Type VI secretion system spike protein VgrG1a from Pseudomonas aeruginosa (strain ATCC 15692 / DSM 22644 / CIP 104116 / JCM 14847 / LMG 12228 / 1C / PRS 101 / PAO1).